Consider the following 160-residue polypeptide: Transcriptional repressor NrdR (160 aa).

The segment at 3-34 is a zinc-finger region; it reads CPRCHHNNSRVIDSRQADDGRAIRRRRECENC. The ATP-cone domain occupies 49–139; sequence LLVIKKNGDR…VYRQFKDMSV (91 aa).

The protein belongs to the NrdR family. Zn(2+) serves as cofactor.

Its function is as follows. Negatively regulates transcription of bacterial ribonucleotide reductase nrd genes and operons by binding to NrdR-boxes. In Enterococcus faecalis (strain ATCC 700802 / V583), this protein is Transcriptional repressor NrdR.